The primary structure comprises 170 residues: Large ribosomal subunit protein uL11 (170 aa).

The protein belongs to the universal ribosomal protein uL11 family. As to quaternary structure, part of the ribosomal stalk of the 50S ribosomal subunit. Interacts with L10 and the large rRNA to form the base of the stalk. L10 forms an elongated spine to which L12 dimers bind in a sequential fashion forming a multimeric L10(L12)X complex.

In terms of biological role, forms part of the ribosomal stalk which helps the ribosome interact with GTP-bound translation factors. The chain is Large ribosomal subunit protein uL11 from Saccharolobus islandicus (strain M.16.27) (Sulfolobus islandicus).